Consider the following 311-residue polypeptide: Serine/threonine-protein phosphatase PP1-1 (311 aa).

Positions 53, 55, 82, and 114 each coordinate Mn(2+). Histidine 115 functions as the Proton donor in the catalytic mechanism. Histidine 164 and histidine 238 together coordinate Mn(2+).

It belongs to the PPP phosphatase family. PP-6 (PP-V) subfamily. As to quaternary structure, inactivated in a complex with phosphatase methylesterase PPE1 (PP2Ai). Interacts with phosphatase 2A activator RRD1, which can reactivate PP2Ai by dissociating the catalytic subunit from the complex. Forms a ternary complex with RRD1-TAP42. It depends on Mn(2+) as a cofactor.

The protein localises to the cytoplasm. It catalyses the reaction O-phospho-L-seryl-[protein] + H2O = L-seryl-[protein] + phosphate. It carries out the reaction O-phospho-L-threonyl-[protein] + H2O = L-threonyl-[protein] + phosphate. Functionally, involved in the dephosphorylation of the large subunit of RNA polymerase II. Is required in late G1 for normal G1 cyclin expression, bud initiation and expression of certain genes that are periodically expressed during late G1. Associates with the SAP proteins in a cell cycle-dependent manner. In Saccharomyces cerevisiae (strain ATCC 204508 / S288c) (Baker's yeast), this protein is Serine/threonine-protein phosphatase PP1-1 (SIT4).